We begin with the raw amino-acid sequence, 63 residues long: Sarcotoxin-1B (63 aa).

The first 23 residues, 1 to 23, serve as a signal peptide directing secretion; sequence MNFNKVFIFVALILAVFAGQSQA. R62 is subject to Arginine amide.

This sequence belongs to the cecropin family.

The protein resides in the secreted. In terms of biological role, sarcotoxins, which are potent bactericidal proteins, are produced in response to injury. They are cytotoxic to both Gram-positive and Gram-negative bacteria. This chain is Sarcotoxin-1B, found in Sarcophaga peregrina (Flesh fly).